The sequence spans 70 residues: MLNPSIDSLLQKIDSKYTLVTVAAKRAREMQLANNCVVEKPVSHKCVGKALEEIDAEALSYVPSEDKVAE.

This sequence belongs to the RNA polymerase subunit omega family. The RNAP catalytic core consists of 2 alpha, 1 beta, 1 beta' and 1 omega subunit. When a sigma factor is associated with the core the holoenzyme is formed, which can initiate transcription.

The enzyme catalyses RNA(n) + a ribonucleoside 5'-triphosphate = RNA(n+1) + diphosphate. Its function is as follows. Promotes RNA polymerase assembly. Latches the N- and C-terminal regions of the beta' subunit thereby facilitating its interaction with the beta and alpha subunits. This Bacillus cereus (strain B4264) protein is DNA-directed RNA polymerase subunit omega.